Consider the following 248-residue polypeptide: Tyrosine recombinase XerD-like (248 aa).

The region spanning Met-1–Tyr-72 is the Core-binding (CB) domain. The region spanning Asp-85–Ser-248 is the Tyr recombinase domain. Catalysis depends on residues Lys-149 and Arg-213. Catalysis depends on Tyr-245, which acts as the O-(3'-phospho-DNA)-tyrosine intermediate.

Belongs to the 'phage' integrase family. XerD-like subfamily.

Its subcellular location is the cytoplasm. Putative tyrosine recombinase. Not involved in the cutting and rejoining of the recombining DNA molecules on dif(SL) site. This Streptococcus pyogenes serotype M18 (strain MGAS8232) protein is Tyrosine recombinase XerD-like.